Consider the following 753-residue polypeptide: Synaptotagmin-like protein 5 (753 aa).

The RabBD domain occupies 7 to 123 (FINLSFLLDH…IISGEWFLEE (117 aa)). The FYVE-type zinc finger occupies 64–106 (CVHCQKSLGLIFDRGAPCQACSLRVCSECRVTGLDGSWKCTVC). Disordered regions lie at residues 145 to 188 (RRSP…GFLL), 221 to 283 (SFKS…GFEN), and 298 to 359 (TKSH…LNSL). At serine 147 the chain carries Phosphoserine. The span at 224–238 (SVSGSDRGSTTSSDL) shows a compositional bias: low complexity. 2 stretches are compositionally biased toward polar residues: residues 260–275 (TQRS…TSIS) and 305–316 (TSGTPSIAVSGT). C2 domains are found at residues 429–550 (VTGE…DEWF) and 590–717 (PQGK…VDWM).

As to quaternary structure, binds RAB27A that has been activated by GTP-binding.

It is found in the membrane. Functionally, may act as Rab effector protein and play a role in vesicle trafficking. Binds phospholipids. The chain is Synaptotagmin-like protein 5 (Sytl5) from Rattus norvegicus (Rat).